A 35-amino-acid polypeptide reads, in one-letter code: Photosystem II reaction center protein T (35 aa).

A helical transmembrane segment spans residues 3 to 23 (ALVYTFLLVSTLGIIFFAIFF).

It belongs to the PsbT family. As to quaternary structure, PSII is composed of 1 copy each of membrane proteins PsbA, PsbB, PsbC, PsbD, PsbE, PsbF, PsbH, PsbI, PsbJ, PsbK, PsbL, PsbM, PsbT, PsbY, PsbZ, Psb30/Ycf12, at least 3 peripheral proteins of the oxygen-evolving complex and a large number of cofactors. It forms dimeric complexes.

The protein resides in the plastid. It localises to the chloroplast thylakoid membrane. Its function is as follows. Found at the monomer-monomer interface of the photosystem II (PS II) dimer, plays a role in assembly and dimerization of PSII. PSII is a light-driven water plastoquinone oxidoreductase, using light energy to abstract electrons from H(2)O, generating a proton gradient subsequently used for ATP formation. In Citrus sinensis (Sweet orange), this protein is Photosystem II reaction center protein T.